The following is a 640-amino-acid chain: Acid beta-fructofuranosidase 2, vacuolar (640 aa).

Residues 1–22 (MDTNTTSYTPLPGDPFLSGPPE) are disordered. Residues 1–29 (MDTNTTSYTPLPGDPFLSGPPETPRRPLK) lie on the Cytoplasmic side of the membrane. The propeptide at 1 to 78 (MDTNTTSYTP…HPQSTTNTML (78 aa)) is removed in mature form. The helical transmembrane segment at 30–49 (GFAVIFASVIFLMSLVALII) threads the bilayer. Residues 50–616 (HQGPQQPPDV…FSPDAASHSS (567 aa)) lie on the Lumenal side of the membrane. Substrate is bound by residues 93-96 (WMND), Gln-112, Trp-120, 155-156 (WT), 219-220 (RD), Glu-274, and Asp-307. The active site involves Asp-96. Residues Cys-464 and Cys-512 are joined by a disulfide bond. A helical membrane pass occupies residues 617–639 (FTPVTVFIKFIVPFGIFLTLYFV). A topological domain (cytoplasmic) is located at residue Arg-640.

It belongs to the glycosyl hydrolase 32 family. Expressed in buds, stems, roots and leaves.

It localises to the membrane. The protein resides in the vacuole membrane. It catalyses the reaction Hydrolysis of terminal non-reducing beta-D-fructofuranoside residues in beta-D-fructofuranosides.. Vacuolar invertase. The protein is Acid beta-fructofuranosidase 2, vacuolar of Rosa hybrid cultivar.